Reading from the N-terminus, the 643-residue chain is DNA polymerase III subunit tau (643 aa).

ATP is bound at residue 45–52 (GTRGVGKT). The Zn(2+) site is built by cysteine 64, cysteine 73, cysteine 76, and cysteine 79. Residues 385-404 (TPTQVPPQPQSAPQQAPTVP) form a disordered region.

Belongs to the DnaX/STICHEL family. In terms of assembly, the DNA polymerase III holoenzyme complex contains at least 10 different subunits organized into 3 functionally essential subassemblies: the Pol III core, the beta sliding clamp processivity factor and the clamp-loading complex. The Pol III core (subunits alpha, epsilon and theta) contains the polymerase and the 3'-5' exonuclease proofreading activities. The polymerase is tethered to the template via the dimeric beta sliding clamp processivity factor. The clamp-loading complex (also called gamma complex) assembles the beta sliding clamp onto the primed template and plays a central role in the organization and communication at the replication fork. The clamp-loading complex contains delta, delta', psi and chi, and 3 copies of either or both of two different DnaX proteins, gamma and tau. The DNA replisome complex has a single clamp loader (3 tau and 1 each of delta, delta', psi and chi subunits) which binds 3 Pol III cores (1 core on the leading strand and 2 on the lagging strand) each with a beta sliding clamp dimer. Additional proteins in the replisome are other copies of gamma, psi and chi, Ssb, DNA helicase and RNA primase. The clamp loader hydrolyzes ATP to assemble the beta processivity factor onto the primed template and plays a central role in the organization and communication at the replication fork; the minimal complex to load the beta sliding clamp on DNA is delta, delta', gamma.

It catalyses the reaction DNA(n) + a 2'-deoxyribonucleoside 5'-triphosphate = DNA(n+1) + diphosphate. Functionally, part of the beta sliding clamp loading complex, which hydrolyzes ATP to load the beta clamp onto primed DNA to form the DNA replication pre-initiation complex. DNA polymerase III is a complex, multichain enzyme responsible for most of the replicative synthesis in bacteria. This DNA polymerase also exhibits 3'-5' exonuclease activity. The gamma complex (gamma(3),delta,delta') is thought to load beta dimers onto DNA by binding ATP which alters the complex's conformation so it can bind beta sliding clamp dimers and open them at one interface. Primed DNA is recognized, ATP is hydrolyzed releasing the gamma complex and closing the beta sliding clamp ring around the primed DNA. Serves as a scaffold to trimerize the core complex. Its function is as follows. Interacts with the delta and delta' subunits to transfer the beta subunit on the DNA. Interacts with ATP, drives ATP-induced conformational changes in the gamma complex that opens the beta sliding clamp ring. After loading of primed DNA ATP is hydrolyzed and the beta sliding clamp ring closes. The sequence is that of DNA polymerase III subunit tau (dnaX) from Escherichia coli (strain K12).